The primary structure comprises 427 residues: Trigger factor (427 aa).

The region spanning 163–248 is the PPIase FKBP-type domain; that stretch reads GDTVVIDFVG…IHEVKAKEVP (86 aa).

It belongs to the FKBP-type PPIase family. Tig subfamily.

The protein resides in the cytoplasm. It catalyses the reaction [protein]-peptidylproline (omega=180) = [protein]-peptidylproline (omega=0). Functionally, involved in protein export. Acts as a chaperone by maintaining the newly synthesized protein in an open conformation. Functions as a peptidyl-prolyl cis-trans isomerase. The polypeptide is Trigger factor (Streptococcus pneumoniae (strain ATCC 700669 / Spain 23F-1)).